The sequence spans 49 residues: Large ribosomal subunit protein bL34 (49 aa).

Belongs to the bacterial ribosomal protein bL34 family.

The polypeptide is Large ribosomal subunit protein bL34 (Sorangium cellulosum (strain So ce56) (Polyangium cellulosum (strain So ce56))).